A 185-amino-acid chain; its full sequence is HTH-type transcriptional regulator PuuR (185 aa).

The segment at 1 to 20 (MSDEGLAPGKRLSEIRQQQG) is disordered. The region spanning 12 to 66 (LSEIRQQQGLSQRRAAELSGLTHSAISTIEQDKVSPAISTLQKLLKVYGLSLSEF) is the HTH cro/C1-type domain. The H-T-H motif DNA-binding region spans 23–42 (QRRAAELSGLTHSAISTIEQ). Positions 111–178 (FETYQPGTTT…TSAGICRIIS (68 aa)) constitute a Cupin type-2 domain.

It participates in amine and polyamine degradation; putrescine degradation [regulation]. Represses puuA, puuD and puuP. The chain is HTH-type transcriptional regulator PuuR (puuR) from Escherichia coli (strain K12).